The following is a 492-amino-acid chain: Probable cytosol aminopeptidase (492 aa).

The Mn(2+) site is built by Lys-248 and Asp-253. Residue Lys-260 is part of the active site. Mn(2+)-binding residues include Asp-271, Asp-330, and Glu-332. Residue Arg-334 is part of the active site.

Belongs to the peptidase M17 family. Mn(2+) is required as a cofactor.

The protein resides in the cytoplasm. It catalyses the reaction Release of an N-terminal amino acid, Xaa-|-Yaa-, in which Xaa is preferably Leu, but may be other amino acids including Pro although not Arg or Lys, and Yaa may be Pro. Amino acid amides and methyl esters are also readily hydrolyzed, but rates on arylamides are exceedingly low.. The enzyme catalyses Release of an N-terminal amino acid, preferentially leucine, but not glutamic or aspartic acids.. Its function is as follows. Presumably involved in the processing and regular turnover of intracellular proteins. Catalyzes the removal of unsubstituted N-terminal amino acids from various peptides. The chain is Probable cytosol aminopeptidase (pepA) from Aeropyrum pernix (strain ATCC 700893 / DSM 11879 / JCM 9820 / NBRC 100138 / K1).